Here is a 708-residue protein sequence, read N- to C-terminus: GID complex associated protein 12 (708 aa).

Low complexity predominate over residues 381–396 (SSRRNSSFSTASSEPR). Positions 381–403 (SSRRNSSFSTASSEPRPLSRRRR) are disordered.

Interacts with core components of the GID/CTLH ubiquitin ligase complex. GID12 binds both the substrate receptor GID4 and the tip of GID5 in the scaffolding module, sealing GID4 onto the scaffold.

Functionally, regulator of the GID E3 ligase complex. Modulates both assembly of the substrate receptor GID4 into the GID E3 ligase complex and its activity toward its substrates. GID12-binding remodels the N-degron binding pocket in the GID(SR4) complex, and could limit substrate accessibility of a bulky substrate to a ubiquitynation active site, thereby stabilizing gluconeogenic enzyme substrates. Involved in actin patch formation. The sequence is that of GID complex associated protein 12 from Saccharomyces cerevisiae (strain ATCC 204508 / S288c) (Baker's yeast).